The chain runs to 393 residues: Meiotic driver wtf19 (393 aa).

Residues 1 to 98 (MKNKYYPLRS…SSGTADNSST (98 aa)) form a disordered region. Residues 11–29 (SMDELSAKNDNEIDLEKGP) are compositionally biased toward basic and acidic residues. Polar residues-rich tracts occupy residues 57-72 (GANN…STTP) and 89-98 (SSGTADNSST). 8 consecutive transmembrane segments (helical) span residues 104-124 (AFLS…YLTY), 137-157 (WVYF…LWYF), 167-187 (VTVI…AQCV), 208-228 (CVKV…IGLF), 233-253 (EMMI…FGCV), 269-289 (CTIS…FWTF), 296-316 (LAKV…TMFL), and 332-352 (VLFI…GALI).

This sequence belongs to the WTF family. As to quaternary structure, homomer. Forms protein aggregates. The two isoforms can interact with each other and with themselves. High sequence similarity is required for their interaction.

The protein resides in the spore membrane. It localises to the vacuole membrane. Its subcellular location is the ascus epiplasm. It is found in the cytoplasm. The protein localises to the endoplasmic reticulum membrane. Its function is as follows. Promotes unequal transmission of alleles from the parental zygote to progeny spores by acting as poison/antidote system where the poison and antidote proteins are produced from the same locus; the poison component is trans-acting and targets all spores within an ascus whereas the antidote component is spore-specific, leading to poisoning of all progeny that do not inherit the allele. Functionally, localizes isoform 2 to the vacuole thereby facilitating its degradation. In terms of biological role, forms toxic aggregates that disrupt spore maturation. The protein is Meiotic driver wtf19 of Schizosaccharomyces pombe (strain 972 / ATCC 24843) (Fission yeast).